Reading from the N-terminus, the 120-residue chain is SAGA-associated factor 11 (120 aa).

A compositionally biased stretch (low complexity) spans 40–60; it reads SLLNSSNSNTNSNTNGTIASN. Positions 40–82 are disordered; that stretch reads SLLNSSNSNTNSNTNGTIASNGGNGTTSDENNEIENSTIQDKS. An SGF11-type zinc finger spans residues 93-114; that stretch reads FRCLNCGRNIAGGRFASHISKC.

This sequence belongs to the SGF11 family. Component of the 1.8 MDa SAGA transcription coactivator-HAT complex. SAGA is built of 5 distinct domains with specialized functions. Within the SAGA complex, SUS1, SGF11, SGF73 and UBP8 form an additional subcomplex of SAGA called the DUB module (deubiquitination module). Interacts directly with SGF73, SUS1 and UBP8.

Its subcellular location is the nucleus. Functions as a component of the transcription regulatory histone acetylation (HAT) complex SAGA. At the promoters, SAGA is required for recruitment of the basal transcription machinery. It influences RNA polymerase II transcriptional activity through different activities such as TBP interaction and promoter selectivity, interaction with transcription activators, and chromatin modification through histone acetylation and deubiquitination. SAGA acetylates nucleosomal histone H3 to some extent (to form H3K9ac, H3K14ac, H3K18ac and H3K23ac). SAGA interacts with DNA via upstream activating sequences (UASs). Involved in transcriptional regulation of a subset of SAGA-regulated genes. Within the SAGA complex, participates in a subcomplex, that specifically deubiquitinates histones H2B. The chain is SAGA-associated factor 11 from Candida albicans (strain SC5314 / ATCC MYA-2876) (Yeast).